The primary structure comprises 106 residues: PTS system fructose-like EIIB component 2 (106 aa).

The PTS EIIB type-2 domain occupies 1 to 103; sequence MTKIIAVTAC…IMSKIEAHLA (103 aa). Cys10 functions as the Phosphocysteine intermediate in the catalytic mechanism. A Phosphocysteine; by EIIA modification is found at Cys10.

The protein localises to the cytoplasm. It carries out the reaction D-fructose(out) + N(pros)-phospho-L-histidyl-[protein] = D-fructose 1-phosphate(in) + L-histidyl-[protein]. The phosphoenolpyruvate-dependent sugar phosphotransferase system (sugar PTS), a major carbohydrate active transport system, catalyzes the phosphorylation of incoming sugar substrates concomitantly with their translocation across the cell membrane. The enzyme II FrwABC PTS system is involved in fructose transport. The protein is PTS system fructose-like EIIB component 2 (frwB) of Escherichia coli O157:H7.